The chain runs to 415 residues: Acrosin (415 aa).

Positions 1-16 (MLPTAVLLVLAVSVAA) are cleaved as a signal peptide. The N-linked (GlcNAc...) asparagine glycan is linked to N19. Cystine bridges form between C22/C152, C26/C160, C71/C87, C175/C244, C207/C223, and C234/C264. In terms of domain architecture, Peptidase S1 spans 40–288 (VVGGMSAEPG…YLNWIASKIG (249 aa)). Catalysis depends on charge relay system residues H86 and D140. N208 is a glycosylation site (N-linked (GlcNAc...) asparagine). Catalysis depends on S238, which acts as the Charge relay system. Disordered stretches follow at residues 296–376 (QLGT…PPQA) and 395–415 (FSSGRSYYETETTDLQELPAS). Pro residues-rich tracts occupy residues 300–312 (PPRPSTPAPPVRP) and 328–367 (PPGPSQQPGSRPRPPAPPPAPPPPPPPPPPPPPPPPPPPQ). The propeptide at 339–415 (PRPPAPPPAP…TTDLQELPAS (77 aa)) is pro-rich. Over residues 395-409 (FSSGRSYYETETTDL) the composition is skewed to polar residues.

It belongs to the peptidase S1 family. In terms of assembly, heavy chain (catalytic) and a light chain linked by two disulfide bonds. Forms a heterodimer with SERPINA5.

The enzyme catalyses Preferential cleavage: Arg-|-Xaa, Lys-|-Xaa.. With respect to regulation, inhibited by SERPINA5. Its function is as follows. Acrosin is the major protease of mammalian spermatozoa. It is a serine protease of trypsin-like cleavage specificity, it is synthesized in a zymogen form, proacrosin and stored in the acrosome. The polypeptide is Acrosin (ACR) (Sus scrofa (Pig)).